The following is a 322-amino-acid chain: Porphobilinogen deaminase (322 aa).

C254 is modified (S-(dipyrrolylmethanemethyl)cysteine).

Belongs to the HMBS family. In terms of assembly, monomer. The cofactor is dipyrromethane.

It catalyses the reaction 4 porphobilinogen + H2O = hydroxymethylbilane + 4 NH4(+). It functions in the pathway porphyrin-containing compound metabolism; protoporphyrin-IX biosynthesis; coproporphyrinogen-III from 5-aminolevulinate: step 2/4. Tetrapolymerization of the monopyrrole PBG into the hydroxymethylbilane pre-uroporphyrinogen in several discrete steps. In Methylococcus capsulatus (strain ATCC 33009 / NCIMB 11132 / Bath), this protein is Porphobilinogen deaminase.